We begin with the raw amino-acid sequence, 523 residues long: Thiamine pathway transporter THI73 (523 aa).

Residues 1-79 (MKNMSQRSMD…LSPKVLRKVD (79 aa)) lie on the Cytoplasmic side of the membrane. Residues 80 to 100 (LFILPFLCCTYLLMFLDKALL) form a helical membrane-spanning segment. The Extracellular portion of the chain corresponds to 101–118 (NYAASMGIKDHLKGNEFS). The helical transmembrane segment at 119-139 (NLGTIFSAAYIFMEPVVTYLI) threads the bilayer. Residues 140 to 141 (QK) lie on the Cytoplasmic side of the membrane. The chain crosses the membrane as a helical span at residues 142–162 (FPISKILGTFITVWGIVLACH). At 163–176 (AACKTYASLMVVRT) the chain is on the extracellular side. The helical transmembrane segment at 177–197 (LLGLFESSSAVGCIAISGMYY) threads the bilayer. Residues 198–207 (TKSEQSARIG) are Cytoplasmic-facing. The chain crosses the membrane as a helical span at residues 208–228 (FWATQAGTGYIVGGLISFGFL). At 229-239 (HYHGTAFTSWQ) the chain is on the extracellular side. Residues 240-260 (IMFLVVGLVTVAFGVLTFLYL) traverse the membrane as a helical segment. Residues 261 to 312 (PDNVTNAWFLNKEEKIQVVEHIRANQTGLETKKFKKQQVKELFLHDKFTWPM) are Cytoplasmic-facing. A helical transmembrane segment spans residues 313-333 (LLLTACSQISTGAIGTFSVTI). Residues 334 to 345 (TGTFGFDKYETA) lie on the Extracellular side of the membrane. The chain crosses the membrane as a helical span at residues 346-366 (LLQLPIGAITAMIILITTQML). Residues 367 to 371 (SRWGH) lie on the Cytoplasmic side of the membrane. A helical membrane pass occupies residues 372 to 392 (ITLITTSMYIPAIIGCIVLIS). The Extracellular portion of the chain corresponds to 393–400 (LPLSHKIG). The helical transmembrane segment at 401–421 (NLFSLYLLYSGSCVITNIYIW) threads the bilayer. Residues 422–432 (NSCNTSGYTKR) are Cytoplasmic-facing. The helical transmembrane segment at 433 to 452 (VFRNAITMIVYNVSCIIAPQ) threads the bilayer. Topologically, residues 453–466 (MFRAYSAPRYIPAK) are extracellular. The chain crosses the membrane as a helical span at residues 467–487 (IALLVTQCVCVPLQLYIGYIC). Residues 488–523 (KKENEKRDKEQEGQERKKYQFLDLTDIENRNFRYIY) are Cytoplasmic-facing.

This sequence belongs to the major facilitator superfamily. Allantoate permease family.

It localises to the endoplasmic reticulum membrane. Its subcellular location is the cell membrane. Its function is as follows. Transports either thiamine or, rather, a related metabolite involved in the thiamine biosynthesis pathway. The chain is Thiamine pathway transporter THI73 (THI73) from Saccharomyces cerevisiae (strain ATCC 204508 / S288c) (Baker's yeast).